A 299-amino-acid polypeptide reads, in one-letter code: MAESIHDVQRRINSTKATRQITSAMHMVSTAKLNKIQKQAVGYQDYVSKVKAVVMHLSQSHLLDNSSSSLQSNRPVKKTAYLVITSDRGMVGSYNSSVLRDTNAFIKERTPNPDDYMVLAVGGTGADFYKHRGVNVAYEYRGVSDVPEFNEVREIVKTVTTMFNNEVFDELFVCYNHFVNRISSRFRAEKMLPVDKETMSTDAAKDTQAAPLTAEYDTEPSEEEVLQVVLPQYAESLVYGAILDAKTAEHASSTNAMQSATDNADDLIATLQLHYNRARQAAITTEITEITGGQEALNN.

The protein belongs to the ATPase gamma chain family. As to quaternary structure, F-type ATPases have 2 components, CF(1) - the catalytic core - and CF(0) - the membrane proton channel. CF(1) has five subunits: alpha(3), beta(3), gamma(1), delta(1), epsilon(1). CF(0) has three main subunits: a, b and c.

The protein localises to the cell membrane. In terms of biological role, produces ATP from ADP in the presence of a proton gradient across the membrane. The gamma chain is believed to be important in regulating ATPase activity and the flow of protons through the CF(0) complex. The polypeptide is ATP synthase gamma chain (Levilactobacillus brevis (strain ATCC 367 / BCRC 12310 / CIP 105137 / JCM 1170 / LMG 11437 / NCIMB 947 / NCTC 947) (Lactobacillus brevis)).